The sequence spans 313 residues: Ketimine reductase mu-crystallin (313 aa).

Arg-47 contributes to the 3,3',5-triiodo-L-thyronine binding site. The NADPH site is built by Ser-90, His-91, Arg-118, Ala-143, Val-145, Gln-146, Asn-167, Arg-168, Thr-169, Asn-172, Thr-204, Met-205, and Val-225. Glu-256 contributes to the 3,3',5-triiodo-L-thyronine binding site. An NADPH-binding site is contributed by Ser-291.

The protein belongs to the ornithine cyclodeaminase/mu-crystallin family. In terms of assembly, homodimer. Binds the thyroid hormone triiodothyronine (T3); T3 binding inhibits enzymatic activity. Expressed in the spiral ligament of the cochlea (at protein level).

Its subcellular location is the cytoplasm. The catalysed reaction is L-pipecolate + NADP(+) = Delta(1)-piperideine-2-carboxylate + NADPH + H(+). It carries out the reaction L-pipecolate + NAD(+) = Delta(1)-piperideine-2-carboxylate + NADH + H(+). The enzyme catalyses L-proline + NADP(+) = 1-pyrroline-2-carboxylate + NADPH + H(+). It catalyses the reaction L-proline + NAD(+) = 1-pyrroline-2-carboxylate + NADH + H(+). The catalysed reaction is (3R)-1,4-thiomorpholine-3-carboxylate + NAD(+) = 3,4-dehydrothiomorpholine-3-carboxylate + NADH + 2 H(+). It carries out the reaction (3R)-1,4-thiomorpholine-3-carboxylate + NADP(+) = 3,4-dehydrothiomorpholine-3-carboxylate + NADPH + 2 H(+). The enzyme catalyses (S)-cystathionine ketimine + NADH + 2 H(+) = (3R,5S)-2,3,5,6,7-pentahydro-1,4-thiazepine-3,5-dicarboxylate + NAD(+). It catalyses the reaction (S)-cystathionine ketimine + NADPH + 2 H(+) = (3R,5S)-2,3,5,6,7-pentahydro-1,4-thiazepine-3,5-dicarboxylate + NADP(+). The catalysed reaction is (R)-lanthionine ketimine + NADPH + 2 H(+) = (3R,5R)-1,4-thiomorpholine-3,5-dicarboxylate + NADP(+). It carries out the reaction Delta(2)-thiazoline-2-carboxylate + NADPH + 2 H(+) = L-thiazolidine-2-carboxylate + NADP(+). Functionally, catalyzes the NAD(P)H-dependent reduction of imine double bonds of a number of cyclic ketimine substrates, including sulfur-containing cyclic ketimines. Under physiological conditions, it efficiently catalyzes delta(1)-piperideine-2-carboxylate (P2C) and delta(1)-pyrroline-2-carboxylate (Pyr2C) reduction, suggesting a central role in lysine and glutamate metabolism. Additional substrates are delta(2)-thiazoline-2-carboxylate (T2C), 3,4-dehydrothiomorpholine-3-carboxylate (AECK), and (R)-lanthionine ketimine (LK) that is reduced at very low rate compared to other substrates. Also catalyzes the NAD(P)H-dependent reduction of (S)-cystathionine ketimine (CysK). The chain is Ketimine reductase mu-crystallin from Mus musculus (Mouse).